We begin with the raw amino-acid sequence, 361 residues long: tRNA-specific 2-thiouridylase MnmA (361 aa).

Residues Gly8 to Ser15 and Met34 each bind ATP. The tract at residues Asn94–Asp96 is interaction with target base in tRNA. Cys99 functions as the Nucleophile in the catalytic mechanism. Cys99 and Cys195 are oxidised to a cystine. Gly123 contacts ATP. An interaction with tRNA region spans residues Lys145 to Gln147. Cys195 serves as the catalytic Cysteine persulfide intermediate. An interaction with tRNA region spans residues Arg307–Tyr308.

The protein belongs to the MnmA/TRMU family.

The protein localises to the cytoplasm. It catalyses the reaction S-sulfanyl-L-cysteinyl-[protein] + uridine(34) in tRNA + AH2 + ATP = 2-thiouridine(34) in tRNA + L-cysteinyl-[protein] + A + AMP + diphosphate + H(+). Its function is as follows. Catalyzes the 2-thiolation of uridine at the wobble position (U34) of tRNA, leading to the formation of s(2)U34. This Legionella pneumophila (strain Lens) protein is tRNA-specific 2-thiouridylase MnmA.